A 73-amino-acid chain; its full sequence is MAGTTGERPFSDILTSIRYWIIHSITVPSLFIAGWLFVSTGLAYDVFGSPRPNEYFSNGQQEAPIVLDRFGKL.

The chain crosses the membrane as a helical span at residues 21–35 (IIHSITVPSLFIAGW). H23 is a heme binding site.

The protein belongs to the PsbE/PsbF family. Heterodimer of an alpha subunit and a beta subunit. PSII is composed of 1 copy each of membrane proteins PsbA, PsbB, PsbC, PsbD, PsbE, PsbF, PsbH, PsbI, PsbJ, PsbK, PsbL, PsbM, PsbT, PsbY, PsbZ, Psb30/Ycf12, at least 3 peripheral proteins of the oxygen-evolving complex and a large number of cofactors. It forms dimeric complexes. The cofactor is heme b.

The protein resides in the plastid. It localises to the chloroplast thylakoid membrane. In terms of biological role, this b-type cytochrome is tightly associated with the reaction center of photosystem II (PSII). PSII is a light-driven water:plastoquinone oxidoreductase that uses light energy to abstract electrons from H(2)O, generating O(2) and a proton gradient subsequently used for ATP formation. It consists of a core antenna complex that captures photons, and an electron transfer chain that converts photonic excitation into a charge separation. The polypeptide is Cytochrome b559 subunit alpha (Bigelowiella natans (Pedinomonas minutissima)).